Consider the following 368-residue polypeptide: MKNQMMKHNPMGKMANSLIQLACPKNISALWSFGSLLGLCLITQILTGIFLAMFYIPNIYQAFDSAIYISRDVNFGWLIRSIHANSASMFFICIYTHTGRGIYYSSHQMKETWMVGVTLLLITILTAFLGYVLPWGQMSFWAATVITNLLSAIPYLGSTIVNWIWGGFSVSNATLTRFYALHFLFPFLISALSLMHIIFLHQSGSSNPLGLNSNNETMKFHIYFSAKDLIGVILLWIMLGSVVLLKPNLLIDPENFIPANPLVTPTHIQPEWYFLPMYAILRSIPNKLGGVLALIMSIAILYFLPMMNKPITKSASMNPKNKIAFWLLVTNFIVLMWIGSKPVESPFEEIGQIMTVTYFSIYMIMSKN.

The next 4 helical transmembrane spans lie at phenylalanine 33–methionine 53, tryptophan 77–glycine 99, threonine 112–valine 132, and phenylalanine 178–isoleucine 198. Heme b contacts are provided by histidine 83 and histidine 97. 2 residues coordinate heme b: histidine 182 and histidine 196. Histidine 201 lines the a ubiquinone pocket. A run of 4 helical transmembrane segments spans residues phenylalanine 224–leucine 244, leucine 288–asparagine 308, isoleucine 323–valine 343, and serine 345–methionine 365.

It belongs to the cytochrome b family. The main subunits of complex b-c1 are: cytochrome b, cytochrome c1 and the Rieske protein. It depends on heme b as a cofactor.

It is found in the mitochondrion inner membrane. Its function is as follows. Component of the ubiquinol-cytochrome c reductase complex (complex III or cytochrome b-c1 complex) that is part of the mitochondrial respiratory chain. The b-c1 complex mediates electron transfer from ubiquinol to cytochrome c. Contributes to the generation of a proton gradient across the mitochondrial membrane that is then used for ATP synthesis. This Bugula neritina (Brown bryozoan) protein is Cytochrome b (mt:Cyt-b).